The chain runs to 201 residues: GTP cyclohydrolase 1 (201 aa).

Residues M1–A20 form a disordered region. Residues C91, H94, and C162 each coordinate Zn(2+).

It belongs to the GTP cyclohydrolase I family. In terms of assembly, homomer.

The enzyme catalyses GTP + H2O = 7,8-dihydroneopterin 3'-triphosphate + formate + H(+). It functions in the pathway cofactor biosynthesis; 7,8-dihydroneopterin triphosphate biosynthesis; 7,8-dihydroneopterin triphosphate from GTP: step 1/1. The polypeptide is GTP cyclohydrolase 1 (Allorhizobium ampelinum (strain ATCC BAA-846 / DSM 112012 / S4) (Agrobacterium vitis (strain S4))).